We begin with the raw amino-acid sequence, 1365 residues long: Zinc finger protein 423 (1365 aa).

Residues 1–11 show a composition bias toward basic residues; it reads MSRRKQAKPRS. Positions 1–69 are disordered; it reads MSRRKQAKPR…SHDERVGEED (69 aa). A compositionally biased stretch (basic and acidic residues) spans 37-51; that stretch reads VSERDSDRKESRAVG. A C2H2-type 1 zinc finger spans residues 76–98; it reads FTCDNCQQDFECLADLTEHRTNH. Residues 99 to 126 are disordered; the sequence is CPADGDDDPGLSWVASSPSSKDVASPSQ. Positions 112–126 are enriched in low complexity; the sequence is VASSPSSKDVASPSQ. C2H2-type zinc fingers lie at residues 150–172, 178–200, 206–228, and 234–256; these read YPCQ…EQIH, FKCT…VKLH, YSCQ…LKTH, and FKCS…MQAH. The interval 250-280 is disordered; it reads QSHMQAHRKNKEHLAKKDQGKRDGSSSDVTE. The segment covering 261–274 has biased composition (basic and acidic residues); it reads EHLAKKDQGKRDGS. 3 C2H2-type zinc fingers span residues 286–309, 318–341, and 346–368; these read YMCD…LTQH, LQCI…DRTH, and HKCP…LDSH. A disordered region spans residues 366-429; it reads DSHRQPDSSN…LAPSSDHDDG (64 aa). A compositionally biased stretch (low complexity) spans 386 to 400; that stretch reads SVASMSSATPDSSAS. Residues 437-461 form a C2H2-type 9; degenerate zinc finger; it reads YSCPYCSKRDFNSLAVLEIHLKTIH. C2H2-type zinc fingers lie at residues 469-492, 513-536, and 555-578; these read HTCQ…RKAH, FHCN…RVSH, and FFCN…QQTH. A C2H2-type 13; atypical zinc finger spans residues 603-628; that stretch reads YSCPYCTNSPIFGSLLKLTKHIKENH. 7 consecutive C2H2-type zinc fingers follow at residues 675 to 697, 705 to 728, 736 to 759, 764 to 787, 794 to 817, 831 to 853, and 857 to 880; these read YPCN…LKSH, QSCP…LTIH, YVCE…LDMH, YHCT…AVKH, YRCT…KHSH, RKCI…ITTH, and YNCR…REKH. Residues 885–895 are compositionally biased toward gly residues; that stretch reads GGNGNGNGGSQ. Residues 885–916 form a disordered region; it reads GGNGNGNGGSQNGTPNGVTQSSKRSTAGSTAA. Residues 902–913 are compositionally biased toward polar residues; that stretch reads VTQSSKRSTAGS. A C2H2-type 21; degenerate zinc finger spans residues 954 to 976; the sequence is YACDICGAAYTMESLLQNHRLRD. 8 consecutive C2H2-type zinc fingers follow at residues 1000-1022, 1029-1051, 1090-1112, 1201-1224, 1249-1271, 1279-1301, 1310-1333, and 1340-1363; these read HKCN…AQTH, YMCP…KVTH, FRCV…GTFH, LRCS…QVDH, YQCI…VANH, HECK…LIEH, FKCP…FAVH, and YDCS…LSQH.

Belongs to the krueppel C2H2-type zinc-finger protein family.

It is found in the nucleus. Its function is as follows. Transcription factor that can both act as an activator or a repressor depending on the context. Plays a central role in BMP signaling and olfactory neurogenesis. Associates with SMADs in response to bmp2 leading to activate transcription of BMP target genes. Acts as a transcriptional repressor involved in terminal olfactory receptor neurons differentiation. Involved in olfactory neurogenesis by participating in a developmental switch that regulates the transition from differentiation to maturation in olfactory receptor neurons. The sequence is that of Zinc finger protein 423 (znf423) from Danio rerio (Zebrafish).